Consider the following 607-residue polypeptide: Siderochrome iron transporter 2 (607 aa).

The segment at 1–46 is disordered; that stretch reads MGLFGSFGARNKATPQVPPGAVAKAPEGTPKGPETNDQPDMDSSRL. The next 13 membrane-spanning stretches (helical) occupy residues 86-106, 129-149, 152-172, 180-200, 210-230, 242-262, 297-317, 326-346, 367-387, 404-424, 432-452, 459-479, and 499-519; these read VWATYAWIWVCFFLLALQSGI, ILSSIIGGVLKLPIAKILNLW, AEGFLVFVGVYTIGLIILAAC, AGYVLFWIGYDAIYLILDVFV, AFTFAFASTPFICTAFTAPLA, WAYGAFAIIMPVALAPLAVVF, IIGAFLLMAAWVLLLLPFSLA, SAAFIAMVIIGFCLFFAFAAW, LGACVMAATLYFSFYCWDLYF, YMTQIYNVGSCFWGVVFGLWV, HTCLFFGLPLMILGAGLMIHF, IGYVIMCQIFIAFGGGTLVIG, and FIGLFSSLGGAIGYAVAAAIY. Asn538 carries N-linked (GlcNAc...) asparagine glycosylation. A helical transmembrane segment spans residues 573–593; it reads FGAVAATCILILGIPAIAVWK.

This sequence belongs to the major facilitator superfamily.

The protein localises to the cell membrane. Functionally, major facilitator transporter involved in ferrichrome (FC) uptake. The polypeptide is Siderochrome iron transporter 2 (Aspergillus fumigatus (strain ATCC MYA-4609 / CBS 101355 / FGSC A1100 / Af293) (Neosartorya fumigata)).